The following is a 67-amino-acid chain: Conotoxin TsMMSK-011 (67 aa).

Positions 1–22 are cleaved as a signal peptide; it reads MMSKLGVLLTICLLLFPLTVLP. Positions 23-50 are excised as a propeptide; sequence MDGDQPADLPALRTQDIATDQSPWFDPV. 3 disulfides stabilise this stretch: Cys53–Cys65, Cys54–Cys61, and Cys58–Cys64. Pro63 is modified (4-hydroxyproline).

This sequence belongs to the conotoxin M superfamily. As to expression, expressed by the venom duct.

It is found in the secreted. The polypeptide is Conotoxin TsMMSK-011 (Conus tessulatus (Tessellate cone)).